Consider the following 340-residue polypeptide: Glyceraldehyde-3-phosphate dehydrogenase (340 aa).

NAD(+) is bound by residues 11 to 12 (SI) and glycine 111. 140 to 142 (SCN) is a binding site for D-glyceraldehyde 3-phosphate. Cysteine 141 serves as the catalytic Nucleophile. NAD(+) is bound at residue arginine 169. A D-glyceraldehyde 3-phosphate-binding site is contributed by 195–196 (HG). Glutamine 303 contributes to the NAD(+) binding site.

Belongs to the glyceraldehyde-3-phosphate dehydrogenase family. Homotetramer.

The protein localises to the cytoplasm. The catalysed reaction is D-glyceraldehyde 3-phosphate + phosphate + NADP(+) = (2R)-3-phospho-glyceroyl phosphate + NADPH + H(+). It carries out the reaction D-glyceraldehyde 3-phosphate + phosphate + NAD(+) = (2R)-3-phospho-glyceroyl phosphate + NADH + H(+). It functions in the pathway carbohydrate degradation; glycolysis; pyruvate from D-glyceraldehyde 3-phosphate: step 1/5. This Methanococcus vannielii (strain ATCC 35089 / DSM 1224 / JCM 13029 / OCM 148 / SB) protein is Glyceraldehyde-3-phosphate dehydrogenase.